The primary structure comprises 199 residues: Protein GrpE (199 aa).

Residues 1–27 (MSEQNTNHESPEQNVAHDNIEHSDSIL) are disordered. Residues 18–27 (DNIEHSDSIL) are compositionally biased toward basic and acidic residues.

This sequence belongs to the GrpE family. As to quaternary structure, homodimer.

Its subcellular location is the cytoplasm. Participates actively in the response to hyperosmotic and heat shock by preventing the aggregation of stress-denatured proteins, in association with DnaK and GrpE. It is the nucleotide exchange factor for DnaK and may function as a thermosensor. Unfolded proteins bind initially to DnaJ; upon interaction with the DnaJ-bound protein, DnaK hydrolyzes its bound ATP, resulting in the formation of a stable complex. GrpE releases ADP from DnaK; ATP binding to DnaK triggers the release of the substrate protein, thus completing the reaction cycle. Several rounds of ATP-dependent interactions between DnaJ, DnaK and GrpE are required for fully efficient folding. The sequence is that of Protein GrpE from Psychrobacter sp. (strain St1).